The sequence spans 435 residues: Glutamate-1-semialdehyde 2,1-aminomutase (435 aa).

Residue lysine 270 is modified to N6-(pyridoxal phosphate)lysine.

Belongs to the class-III pyridoxal-phosphate-dependent aminotransferase family. HemL subfamily. In terms of assembly, homodimer. The cofactor is pyridoxal 5'-phosphate.

It is found in the cytoplasm. It carries out the reaction (S)-4-amino-5-oxopentanoate = 5-aminolevulinate. It participates in porphyrin-containing compound metabolism; protoporphyrin-IX biosynthesis; 5-aminolevulinate from L-glutamyl-tRNA(Glu): step 2/2. This is Glutamate-1-semialdehyde 2,1-aminomutase from Wigglesworthia glossinidia brevipalpis.